The sequence spans 690 residues: MLPRGRPRALGAALLLLLLLVVGFFLFGRDPEYGLGTTATLDGDPYGSRNRSTSSLQLLLPPKCEMLHVAIVCAGYNSSREIITLMKSVLFYRKNPLHLHLITDAVARNILETLFRTWMVPAVVVSFYDAEELKPLVSWIPNKHYSGLYGLMKLVLPSVLPLSLARVIVLDTDVTFSSDIMELWALFGHFSDKQVVGLVENQSDWYLGNLWKNHRPWPALGRGFNTGVILLWLDRLQQIGWEQMWKLTAKRELLTLTATSLADQDIFNAVIKEHPELVHPLPCVWNVQLSDHTLAERCYLEAADLKVIHWNSPKKLRVKNKHAEFFRDLHLTFLGFDGKLLCRELFGCPNQFPPGVEQLQQALAQLDEEEPCFEFRQQQLTVHRVHITFLSHQPPPPRPHDVTLVAQLSMDRLQMLEALCRHWRGPMSLALYLTDAEAQQFLRFVETSPVLSARKDVAYHVVYRDGPLYPVNQLRNVALAQALTPYVFLSDIDFLPAYSLYDYLRASIEQLALGRRQRKAALVVPAFETLHYRFSFPNSKAELLTLLDAGSLHTFRYHEWPQGHASTDYTRWREAQAPYRVQWSADYEPYVVVPRDCPRYDPRFVGFGWNKVAHIIELDAQEYEFLVLPEAFSIHLPHAPSLDISRFRSSPTYRDCLQALKEEFHQDLSRRYGSAALKYLTALQQSRSRA.

At 1-7 (MLPRGRP) the chain is on the cytoplasmic side. Residues 8 to 28 (RALGAALLLLLLLVVGFFLFG) form a helical; Signal-anchor for type II membrane protein membrane-spanning segment. The Lumenal portion of the chain corresponds to 29–690 (RDPEYGLGTT…TALQQSRSRA (662 aa)). N-linked (GlcNAc...) asparagine glycans are attached at residues Asn-50 and Asn-77. Positions 67-342 (LHVAIVCAGY…FLGFDGKLLC (276 aa)) are xylosyltransferase activity. Positions 171 and 173 each coordinate Mn(2+). Asn-201 carries an N-linked (GlcNAc...) asparagine glycan. Positions 343–686 (RELFGCPNQF…LKYLTALQQS (344 aa)) are glucuronyltransferase activity. Mn(2+) contacts are provided by Asp-491 and Asp-493.

This sequence in the C-terminal section; belongs to the glycosyltransferase 49 family. In the N-terminal section; belongs to the glycosyltransferase 8 family. Interacts with B4GAT1. It depends on Mn(2+) as a cofactor.

Its subcellular location is the golgi apparatus membrane. The enzyme catalyses 3-O-[beta-D-GlcA-(1-&gt;3)-beta-D-Xyl-(1-&gt;4)-Rib-ol-P-Rib-ol-P-3-beta-D-GalNAc-(1-&gt;3)-beta-D-GlcNAc-(1-&gt;4)-(O-6-P-alpha-D-Man)]-Thr-[protein] + UDP-alpha-D-xylose = 3-O-[alpha-D-Xyl-(1-&gt;3)-beta-D-GlcA-(1-&gt;4)-beta-D-Xyl-(1-&gt;4)-Rib-ol-P-Rib-ol-P-3-beta-D-GalNAc-(1-&gt;3)-beta-D-GlcNAc-(1-&gt;4)-(O-6-P-alpha-D-Man)]-Thr-[protein] + UDP + H(+). It catalyses the reaction 3-O-{(1-&gt;[3)-alpha-D-Xyl-(1-&gt;3)-beta-D-GlcA-(1-&gt;](n)-4)-beta-D-Xyl-(1-&gt;4)-Rib-ol-P-Rib-ol-P-3-beta-D-GalNAc-(1-&gt;3)-beta-D-GlcNAc-(1-&gt;4)-O-6-P-alpha-D-Man}-L-Thr-[protein] + UDP-alpha-D-glucuronate = 3-O-{beta-D-GlcA-(1-&gt;[3)-alpha-D-Xyl-(1-&gt;3)-beta-D-GlcA-(1-&gt;](n)-4)-beta-D-Xyl-(1-&gt;4)-Rib-ol-P-Rib-ol-P-3-beta-D-GalNAc-(1-&gt;3)-beta-D-GlcNAc-(1-&gt;4)-O-6-P-alpha-D-Man}-L-Thr-[protein] + UDP + H(+). The catalysed reaction is 3-O-{beta-D-GlcA-(1-&gt;[3)-alpha-D-Xyl-(1-&gt;3)-beta-D-GlcA-(1-&gt;](n)-4)-beta-D-Xyl-(1-&gt;4)-Rib-ol-P-Rib-ol-P-3-beta-D-GalNAc-(1-&gt;3)-beta-D-GlcNAc-(1-&gt;4)-O-6-P-alpha-D-Man}-L-Thr-[protein] + UDP-alpha-D-xylose = 3-O-{(1-&gt;[3)-alpha-D-Xyl-(1-&gt;3)-beta-D-GlcA-(1-&gt;](n+1)-4)-beta-D-Xyl-(1-&gt;4)-Rib-ol-P-Rib-ol-P-3-beta-D-GalNAc-(1-&gt;3)-beta-D-GlcNAc-(1-&gt;4)-O-6-P-alpha-D-Man}-L-Thr-[protein] + UDP + H(+). It functions in the pathway protein modification; protein glycosylation. Bifunctional glycosyltransferase with both alpha-1,3-xylosyltransferase and beta-1,3-glucuronyltransferase activities involved in the maturation of alpha-dystroglycan (DAG1) by glycosylation leading to DAG1 binding to laminin G-like domain-containing extracellular proteins with high affinity and in a phosphorylated-O-mannosyl trisaccharide dependent manner. Elongates the glucuronyl-beta-1,4-xylose-beta disaccharide primer structure by adding repeating units [-3-Xylose-alpha-1,3-GlcA-beta-1-] to produce a heteropolysaccharide. Supports the maturation of DAG1 more effectively than LARGE1. In addition, can modify both heparan sulfate (HS)- and chondroitin/dermatan sulfate (CS/DS)-proteoglycans (PGs), namely GPC4, with a glycosaminoglycan (GAG)-like polysaccharide composed of xylose and glucuronic acid to confer laminin binding. This is Xylosyl- and glucuronyltransferase LARGE2 from Rattus norvegicus (Rat).